The following is a 345-amino-acid chain: Phosphoribosylformylglycinamidine cyclo-ligase (345 aa).

It belongs to the AIR synthase family.

The protein localises to the cytoplasm. It catalyses the reaction 2-formamido-N(1)-(5-O-phospho-beta-D-ribosyl)acetamidine + ATP = 5-amino-1-(5-phospho-beta-D-ribosyl)imidazole + ADP + phosphate + H(+). The protein operates within purine metabolism; IMP biosynthesis via de novo pathway; 5-amino-1-(5-phospho-D-ribosyl)imidazole from N(2)-formyl-N(1)-(5-phospho-D-ribosyl)glycinamide: step 2/2. The polypeptide is Phosphoribosylformylglycinamidine cyclo-ligase (Salmonella choleraesuis (strain SC-B67)).